The primary structure comprises 396 residues: Ubiquitin-like modifier-activating enzyme 5 (396 aa).

ATP is bound by residues Gly-76, Asp-97, Lys-120, Asn-143, and Asn-177. Cys-219 and Cys-222 together coordinate Zn(2+). Cys-243 functions as the Glycyl thioester intermediate in the catalytic mechanism. Positions 296 and 301 each coordinate Zn(2+).

The protein belongs to the ubiquitin-activating E1 family. UBA5 subfamily.

In terms of biological role, E1-like enzyme which activates UFM1. The polypeptide is Ubiquitin-like modifier-activating enzyme 5 (Drosophila ananassae (Fruit fly)).